The sequence spans 131 residues: C-glycoside deglycosidase beta subunit (131 aa).

Belongs to the C-glycoside deglycosidase beta subunit family. In terms of assembly, heterodimer composed of an alpha subunit (CarB) and a beta subunit (CarC). The cofactor is a divalent metal cation.

The catalysed reaction is 3''-dehydroisovitexin = 1,5-anhydro-D-erythro-hex-1-en-3-ulose + apigenin. The enzyme catalyses 3''-dehydroisoorientin = 1,5-anhydro-D-erythro-hex-1-en-3-ulose + luteolin. Carbon-carbon bond-cleaving enzyme which participates in the metabolism of C-glycosides. Acts on the C6-glycosylated compounds 3''-dehydroisovitexin (3''-oxo-isovitexin) and 3''-dehydroisoorientin (3''-oxo-homoorientin). Shows weak activity with 3'-dehydromangiferin (3'-oxo-mangiferin). The chain is C-glycoside deglycosidase beta subunit from Microbacterium trichothecenolyticum (Aureobacterium trichothecenolyticum).